The following is a 391-amino-acid chain: Multidrug resistance protein MdtL (391 aa).

Topologically, residues 1–3 are cytoplasmic; that stretch reads MSR. Residues 4–24 form a helical membrane-spanning segment; the sequence is FLICSFALVLLYPAGIDMYLV. Residues 25 to 41 are Periplasmic-facing; the sequence is GLPRIAADLNASEAQLH. A helical transmembrane segment spans residues 42-62; it reads IAFSVYLAGMAAAMLFAGKVA. The Cytoplasmic segment spans residues 63-68; it reads DRSGRK. The chain crosses the membrane as a helical span at residues 69–89; that stretch reads PVAIPGAALFIIASVFCSLAE. Over 90–92 the chain is Periplasmic; the sequence is TST. The helical transmembrane segment at 93-113 threads the bilayer; that stretch reads LFLAGRFLQGLGAGCCYVVAF. Residues 114 to 130 are Cytoplasmic-facing; the sequence is AILRDTLDDRRRAKVLS. Residues 131 to 151 form a helical membrane-spanning segment; that stretch reads LLNGITCIIPVLAPVLGHLIM. Residues 152 to 157 are Periplasmic-facing; that stretch reads LKFPWQ. Residues 158–178 traverse the membrane as a helical segment; sequence SLFWTMAIMGIAVLMLSLFIL. At 179–198 the chain is on the cytoplasmic side; sequence KETRPAAPAASDKSRENSES. The chain crosses the membrane as a helical span at residues 199–221; that stretch reads LLNRFFLSRVVITTLSVSVILTF. At 222–244 the chain is on the periplasmic side; sequence VNTSPVLLMEIMGFERGEYATIM. A helical transmembrane segment spans residues 245-265; the sequence is ALTAGVSMTVSFSTPFALGIF. Topologically, residues 266–268 are cytoplasmic; it reads KPR. The helical transmembrane segment at 269 to 289 threads the bilayer; sequence TLMITSQVLFLAAGITLAVSP. Residues 290 to 292 are Periplasmic-facing; that stretch reads SHA. The chain crosses the membrane as a helical span at residues 293–313; sequence ISLFGITLICAGFSVGFGVAM. Over 314-330 the chain is Cytoplasmic; sequence SQALGPFSLRAGVASST. Residues 331–351 form a helical membrane-spanning segment; it reads LGIAQVCGSSLWIWLAAVVGI. Residues 352–355 are Periplasmic-facing; the sequence is GAWN. The helical transmembrane segment at 356–376 threads the bilayer; it reads MLIGILIACSIVSLLLIMFVA. Residues 377–391 lie on the Cytoplasmic side of the membrane; sequence PGRPVAAHEEIHHHA.

Belongs to the major facilitator superfamily. DHA1 family. MdtL (TC 2.A.1.2.22) subfamily.

It localises to the cell inner membrane. The polypeptide is Multidrug resistance protein MdtL (Shigella dysenteriae serotype 1 (strain Sd197)).